A 366-amino-acid chain; its full sequence is NADH-quinone oxidoreductase subunit H (366 aa).

The next 8 membrane-spanning stretches (helical) occupy residues Leu-27–Ala-47, Phe-99–Val-119, Leu-134–Ala-154, Ala-168–Met-188, Phe-206–Val-226, Ile-268–Ile-288, Ile-294–Phe-314, and Leu-329–Met-349.

It belongs to the complex I subunit 1 family. As to quaternary structure, NDH-1 is composed of 14 different subunits. Subunits NuoA, H, J, K, L, M, N constitute the membrane sector of the complex.

The protein resides in the cell inner membrane. It carries out the reaction a quinone + NADH + 5 H(+)(in) = a quinol + NAD(+) + 4 H(+)(out). Functionally, NDH-1 shuttles electrons from NADH, via FMN and iron-sulfur (Fe-S) centers, to quinones in the respiratory chain. The immediate electron acceptor for the enzyme in this species is believed to be ubiquinone. Couples the redox reaction to proton translocation (for every two electrons transferred, four hydrogen ions are translocated across the cytoplasmic membrane), and thus conserves the redox energy in a proton gradient. This subunit may bind ubiquinone. The protein is NADH-quinone oxidoreductase subunit H of Nitrosomonas europaea (strain ATCC 19718 / CIP 103999 / KCTC 2705 / NBRC 14298).